Reading from the N-terminus, the 214-residue chain is Imidazole glycerol phosphate synthase subunit HisH (214 aa).

The Glutamine amidotransferase type-1 domain maps to 3–211 (IIAVIDYDMG…VEQVQATLAT (209 aa)). C81 acts as the Nucleophile in catalysis. Active-site residues include H186 and E188.

Heterodimer of HisH and HisF.

It localises to the cytoplasm. It carries out the reaction 5-[(5-phospho-1-deoxy-D-ribulos-1-ylimino)methylamino]-1-(5-phospho-beta-D-ribosyl)imidazole-4-carboxamide + L-glutamine = D-erythro-1-(imidazol-4-yl)glycerol 3-phosphate + 5-amino-1-(5-phospho-beta-D-ribosyl)imidazole-4-carboxamide + L-glutamate + H(+). The catalysed reaction is L-glutamine + H2O = L-glutamate + NH4(+). It participates in amino-acid biosynthesis; L-histidine biosynthesis; L-histidine from 5-phospho-alpha-D-ribose 1-diphosphate: step 5/9. Its function is as follows. IGPS catalyzes the conversion of PRFAR and glutamine to IGP, AICAR and glutamate. The HisH subunit catalyzes the hydrolysis of glutamine to glutamate and ammonia as part of the synthesis of IGP and AICAR. The resulting ammonia molecule is channeled to the active site of HisF. The sequence is that of Imidazole glycerol phosphate synthase subunit HisH from Acaryochloris marina (strain MBIC 11017).